Here is a 177-residue protein sequence, read N- to C-terminus: Endoribonuclease YbeY (177 aa).

Zn(2+) contacts are provided by H118, H122, and H128.

The protein belongs to the endoribonuclease YbeY family. It depends on Zn(2+) as a cofactor.

It is found in the cytoplasm. Its function is as follows. Single strand-specific metallo-endoribonuclease involved in late-stage 70S ribosome quality control and in maturation of the 3' terminus of the 16S rRNA. The protein is Endoribonuclease YbeY of Mycobacterium bovis (strain ATCC BAA-935 / AF2122/97).